A 482-amino-acid chain; its full sequence is tRNA sulfurtransferase (482 aa).

The THUMP domain maps to 61 to 165 (LAIRDALTRI…DDRLLLIKGR (105 aa)). Residues 183 to 184 (LI), Lys-265, Gly-287, and Gln-296 contribute to the ATP site. An intrachain disulfide couples Cys-344 to Cys-456. In terms of domain architecture, Rhodanese spans 404–482 (FGPNDVILDI…GFNNVKVYRP (79 aa)). Cys-456 (cysteine persulfide intermediate) is an active-site residue.

This sequence belongs to the ThiI family.

It is found in the cytoplasm. The enzyme catalyses [ThiI sulfur-carrier protein]-S-sulfanyl-L-cysteine + a uridine in tRNA + 2 reduced [2Fe-2S]-[ferredoxin] + ATP + H(+) = [ThiI sulfur-carrier protein]-L-cysteine + a 4-thiouridine in tRNA + 2 oxidized [2Fe-2S]-[ferredoxin] + AMP + diphosphate. It carries out the reaction [ThiS sulfur-carrier protein]-C-terminal Gly-Gly-AMP + S-sulfanyl-L-cysteinyl-[cysteine desulfurase] + AH2 = [ThiS sulfur-carrier protein]-C-terminal-Gly-aminoethanethioate + L-cysteinyl-[cysteine desulfurase] + A + AMP + 2 H(+). The protein operates within cofactor biosynthesis; thiamine diphosphate biosynthesis. Its function is as follows. Catalyzes the ATP-dependent transfer of a sulfur to tRNA to produce 4-thiouridine in position 8 of tRNAs, which functions as a near-UV photosensor. Also catalyzes the transfer of sulfur to the sulfur carrier protein ThiS, forming ThiS-thiocarboxylate. This is a step in the synthesis of thiazole, in the thiamine biosynthesis pathway. The sulfur is donated as persulfide by IscS. The sequence is that of tRNA sulfurtransferase from Shigella boydii serotype 4 (strain Sb227).